The primary structure comprises 430 residues: Adenylosuccinate synthetase (430 aa).

Residues 13–19 (GDEGKGK) and 41–43 (GHT) contribute to the GTP site. Aspartate 14 acts as the Proton acceptor in catalysis. 2 residues coordinate Mg(2+): aspartate 14 and glycine 41. IMP-binding positions include 14–17 (DEGK), 39–42 (NAGH), threonine 130, arginine 144, glutamine 225, threonine 240, and arginine 304. The active-site Proton donor is histidine 42. Substrate is bound at residue 300–306 (STTGRAR). Residues arginine 306, 332-334 (KLD), and 414-416 (STG) each bind GTP.

The protein belongs to the adenylosuccinate synthetase family. In terms of assembly, homodimer. Mg(2+) is required as a cofactor.

The protein resides in the cytoplasm. It catalyses the reaction IMP + L-aspartate + GTP = N(6)-(1,2-dicarboxyethyl)-AMP + GDP + phosphate + 2 H(+). It participates in purine metabolism; AMP biosynthesis via de novo pathway; AMP from IMP: step 1/2. Functionally, plays an important role in the de novo pathway of purine nucleotide biosynthesis. Catalyzes the first committed step in the biosynthesis of AMP from IMP. This Thioalkalivibrio sulfidiphilus (strain HL-EbGR7) protein is Adenylosuccinate synthetase.